The primary structure comprises 378 residues: Succinyl-diaminopimelate desuccinylase (378 aa).

H66 contacts Zn(2+). Residue D68 is part of the active site. Residue D100 participates in Zn(2+) binding. Residue E134 is the Proton acceptor of the active site. Zn(2+)-binding residues include E135, E163, and H350.

This sequence belongs to the peptidase M20A family. DapE subfamily. Homodimer. It depends on Zn(2+) as a cofactor. The cofactor is Co(2+).

It carries out the reaction N-succinyl-(2S,6S)-2,6-diaminopimelate + H2O = (2S,6S)-2,6-diaminopimelate + succinate. It functions in the pathway amino-acid biosynthesis; L-lysine biosynthesis via DAP pathway; LL-2,6-diaminopimelate from (S)-tetrahydrodipicolinate (succinylase route): step 3/3. Its function is as follows. Catalyzes the hydrolysis of N-succinyl-L,L-diaminopimelic acid (SDAP), forming succinate and LL-2,6-diaminopimelate (DAP), an intermediate involved in the bacterial biosynthesis of lysine and meso-diaminopimelic acid, an essential component of bacterial cell walls. This chain is Succinyl-diaminopimelate desuccinylase, found in Hydrogenovibrio crunogenus (strain DSM 25203 / XCL-2) (Thiomicrospira crunogena).